The sequence spans 363 residues: Phosphoserine aminotransferase (363 aa).

Arg42 lines the L-glutamate pocket. Residues 76–77, Trp101, Thr151, Asp170, and Gln193 contribute to the pyridoxal 5'-phosphate site; that span reads AS. Lys194 carries the N6-(pyridoxal phosphate)lysine modification. 234 to 235 lines the pyridoxal 5'-phosphate pocket; sequence NT.

This sequence belongs to the class-V pyridoxal-phosphate-dependent aminotransferase family. SerC subfamily. In terms of assembly, homodimer. It depends on pyridoxal 5'-phosphate as a cofactor.

The protein localises to the cytoplasm. It catalyses the reaction O-phospho-L-serine + 2-oxoglutarate = 3-phosphooxypyruvate + L-glutamate. The catalysed reaction is 4-(phosphooxy)-L-threonine + 2-oxoglutarate = (R)-3-hydroxy-2-oxo-4-phosphooxybutanoate + L-glutamate. The protein operates within amino-acid biosynthesis; L-serine biosynthesis; L-serine from 3-phospho-D-glycerate: step 2/3. Its function is as follows. Catalyzes the reversible conversion of 3-phosphohydroxypyruvate to phosphoserine and of 3-hydroxy-2-oxo-4-phosphonooxybutanoate to phosphohydroxythreonine. The protein is Phosphoserine aminotransferase of Listeria monocytogenes serotype 4b (strain F2365).